Consider the following 419-residue polypeptide: Glutamate dehydrogenase (419 aa).

The active site involves lysine 105. Glycine 219–tyrosine 225 serves as a coordination point for NAD(+).

This sequence belongs to the Glu/Leu/Phe/Val dehydrogenases family. In terms of assembly, homohexamer.

It localises to the cytoplasm. It carries out the reaction L-glutamate + NAD(+) + H2O = 2-oxoglutarate + NH4(+) + NADH + H(+). The catalysed reaction is L-glutamate + NADP(+) + H2O = 2-oxoglutarate + NH4(+) + NADPH + H(+). This is Glutamate dehydrogenase (gdhA) from Thermococcus litoralis (strain ATCC 51850 / DSM 5473 / JCM 8560 / NS-C).